The following is a 325-amino-acid chain: Lipoyl synthase (325 aa).

[4Fe-4S] cluster-binding residues include Cys-68, Cys-73, Cys-79, Cys-94, Cys-98, Cys-101, and Ser-308. Positions Phe-80–Thr-297 constitute a Radical SAM core domain.

Belongs to the radical SAM superfamily. Lipoyl synthase family. Requires [4Fe-4S] cluster as cofactor.

It localises to the cytoplasm. It carries out the reaction [[Fe-S] cluster scaffold protein carrying a second [4Fe-4S](2+) cluster] + N(6)-octanoyl-L-lysyl-[protein] + 2 oxidized [2Fe-2S]-[ferredoxin] + 2 S-adenosyl-L-methionine + 4 H(+) = [[Fe-S] cluster scaffold protein] + N(6)-[(R)-dihydrolipoyl]-L-lysyl-[protein] + 4 Fe(3+) + 2 hydrogen sulfide + 2 5'-deoxyadenosine + 2 L-methionine + 2 reduced [2Fe-2S]-[ferredoxin]. The protein operates within protein modification; protein lipoylation via endogenous pathway; protein N(6)-(lipoyl)lysine from octanoyl-[acyl-carrier-protein]: step 2/2. In terms of biological role, catalyzes the radical-mediated insertion of two sulfur atoms into the C-6 and C-8 positions of the octanoyl moiety bound to the lipoyl domains of lipoate-dependent enzymes, thereby converting the octanoylated domains into lipoylated derivatives. This Alcanivorax borkumensis (strain ATCC 700651 / DSM 11573 / NCIMB 13689 / SK2) protein is Lipoyl synthase.